Consider the following 414-residue polypeptide: CinA-like protein (414 aa).

This sequence belongs to the CinA family.

The polypeptide is CinA-like protein (Koribacter versatilis (strain Ellin345)).